The chain runs to 986 residues: Bifunctional glutamine synthetase adenylyltransferase/adenylyl-removing enzyme (986 aa).

The adenylyl removase stretch occupies residues 1 to 470 (MAAVAKRTVT…ERHYAALFET (470 aa)). The adenylyl transferase stretch occupies residues 476–986 (AGIGNLVFTG…FDLLLRAGRP (511 aa)).

Belongs to the GlnE family. The cofactor is Mg(2+).

The catalysed reaction is [glutamine synthetase]-O(4)-(5'-adenylyl)-L-tyrosine + phosphate = [glutamine synthetase]-L-tyrosine + ADP. It catalyses the reaction [glutamine synthetase]-L-tyrosine + ATP = [glutamine synthetase]-O(4)-(5'-adenylyl)-L-tyrosine + diphosphate. Involved in the regulation of glutamine synthetase GlnA, a key enzyme in the process to assimilate ammonia. When cellular nitrogen levels are high, the C-terminal adenylyl transferase (AT) inactivates GlnA by covalent transfer of an adenylyl group from ATP to specific tyrosine residue of GlnA, thus reducing its activity. Conversely, when nitrogen levels are low, the N-terminal adenylyl removase (AR) activates GlnA by removing the adenylyl group by phosphorolysis, increasing its activity. The regulatory region of GlnE binds the signal transduction protein PII (GlnB) which indicates the nitrogen status of the cell. In Mesorhizobium japonicum (strain LMG 29417 / CECT 9101 / MAFF 303099) (Mesorhizobium loti (strain MAFF 303099)), this protein is Bifunctional glutamine synthetase adenylyltransferase/adenylyl-removing enzyme.